The chain runs to 389 residues: S-adenosylmethionine synthase (389 aa).

An ATP-binding site is contributed by His15. Asp17 lines the Mg(2+) pocket. Glu43 is a binding site for K(+). Residues Glu56 and Gln99 each contribute to the L-methionine site. Residues 99 to 109 (QSPDIAQGVNE) form a flexible loop region. ATP-binding positions include 166-168 (DAK), 234-235 (RF), Asp243, 249-250 (RK), Ala266, and Lys270. Asp243 is an L-methionine binding site. Lys274 is an L-methionine binding site.

Belongs to the AdoMet synthase family. Homotetramer; dimer of dimers. The cofactor is Mg(2+). Requires K(+) as cofactor.

It localises to the cytoplasm. The catalysed reaction is L-methionine + ATP + H2O = S-adenosyl-L-methionine + phosphate + diphosphate. Its pathway is amino-acid biosynthesis; S-adenosyl-L-methionine biosynthesis; S-adenosyl-L-methionine from L-methionine: step 1/1. Functionally, catalyzes the formation of S-adenosylmethionine (AdoMet) from methionine and ATP. The overall synthetic reaction is composed of two sequential steps, AdoMet formation and the subsequent tripolyphosphate hydrolysis which occurs prior to release of AdoMet from the enzyme. This Neisseria gonorrhoeae (strain ATCC 700825 / FA 1090) protein is S-adenosylmethionine synthase.